The sequence spans 194 residues: Imidazoleglycerol-phosphate dehydratase (194 aa).

The protein belongs to the imidazoleglycerol-phosphate dehydratase family.

Its subcellular location is the cytoplasm. It catalyses the reaction D-erythro-1-(imidazol-4-yl)glycerol 3-phosphate = 3-(imidazol-4-yl)-2-oxopropyl phosphate + H2O. The protein operates within amino-acid biosynthesis; L-histidine biosynthesis; L-histidine from 5-phospho-alpha-D-ribose 1-diphosphate: step 6/9. This Methanothermobacter thermautotrophicus (strain ATCC 29096 / DSM 1053 / JCM 10044 / NBRC 100330 / Delta H) (Methanobacterium thermoautotrophicum) protein is Imidazoleglycerol-phosphate dehydratase.